A 312-amino-acid chain; its full sequence is uncharacterized protein (312 aa).

A run of 2 helical transmembrane segments spans residues 4-24 and 286-306; these read AIYLLILCIFGLFSVYFTYAE and YLLSFIGIIIGFGIIGLAIYL.

It is found in the cell membrane. This is an uncharacterized protein from Methanocaldococcus jannaschii (strain ATCC 43067 / DSM 2661 / JAL-1 / JCM 10045 / NBRC 100440) (Methanococcus jannaschii).